The sequence spans 1178 residues: DNA-directed RNA polymerase subunit beta' (1178 aa).

Zn(2+) contacts are provided by cysteine 60, cysteine 62, cysteine 75, and cysteine 78. The Mg(2+) site is built by aspartate 450, aspartate 452, and aspartate 454. Residues cysteine 795, cysteine 869, cysteine 876, and cysteine 879 each contribute to the Zn(2+) site.

Belongs to the RNA polymerase beta' chain family. As to quaternary structure, the RNAP catalytic core consists of 2 alpha, 1 beta, 1 beta' and 1 omega subunit. When a sigma factor is associated with the core the holoenzyme is formed, which can initiate transcription. Requires Mg(2+) as cofactor. It depends on Zn(2+) as a cofactor.

The catalysed reaction is RNA(n) + a ribonucleoside 5'-triphosphate = RNA(n+1) + diphosphate. DNA-dependent RNA polymerase catalyzes the transcription of DNA into RNA using the four ribonucleoside triphosphates as substrates. The polypeptide is DNA-directed RNA polymerase subunit beta' (Clostridium botulinum (strain Loch Maree / Type A3)).